A 279-amino-acid polypeptide reads, in one-letter code: Proteasome subunit beta (279 aa).

Positions 1-51 (MTFDASGRLPEAFLTPGGSSFMDFLAGHAPDLLPGRRSLGTGDLSKDVPHG) are cleaved as a propeptide — removed in mature form; by autocatalysis. The active-site Nucleophile is Thr-52.

The protein belongs to the peptidase T1B family. In terms of assembly, the 20S proteasome core is composed of 14 alpha and 14 beta subunits that assemble into four stacked heptameric rings, resulting in a barrel-shaped structure. The two inner rings, each composed of seven catalytic beta subunits, are sandwiched by two outer rings, each composed of seven alpha subunits. The catalytic chamber with the active sites is on the inside of the barrel. Has a gated structure, the ends of the cylinder being occluded by the N-termini of the alpha-subunits. Is capped by the proteasome-associated ATPase, ARC.

The protein localises to the cytoplasm. It catalyses the reaction Cleavage of peptide bonds with very broad specificity.. It functions in the pathway protein degradation; proteasomal Pup-dependent pathway. The formation of the proteasomal ATPase ARC-20S proteasome complex, likely via the docking of the C-termini of ARC into the intersubunit pockets in the alpha-rings, may trigger opening of the gate for substrate entry. Interconversion between the open-gate and close-gate conformations leads to a dynamic regulation of the 20S proteasome proteolysis activity. Its function is as follows. Component of the proteasome core, a large protease complex with broad specificity involved in protein degradation. This Kribbella flavida (strain DSM 17836 / JCM 10339 / NBRC 14399) protein is Proteasome subunit beta.